The primary structure comprises 264 residues: DNA-directed RNA polymerase subunit Rpo3 (264 aa).

3 residues coordinate [3Fe-4S] cluster: Cys203, Cys206, and Cys209.

This sequence belongs to the archaeal Rpo3/eukaryotic RPB3 RNA polymerase subunit family. Part of the RNA polymerase complex. The cofactor is [3Fe-4S] cluster.

The protein localises to the cytoplasm. It catalyses the reaction RNA(n) + a ribonucleoside 5'-triphosphate = RNA(n+1) + diphosphate. DNA-dependent RNA polymerase (RNAP) catalyzes the transcription of DNA into RNA using the four ribonucleoside triphosphates as substrates. The protein is DNA-directed RNA polymerase subunit Rpo3 of Archaeoglobus fulgidus (strain ATCC 49558 / DSM 4304 / JCM 9628 / NBRC 100126 / VC-16).